The following is a 244-amino-acid chain: Protein DMP9 (244 aa).

A disordered region spans residues 1–56 (MEKTEESVGIRVYTATPPQKPSPSPPSRSPKPVLISSLPSLPSGAAAGGGRGRKRR). Residues 18 to 29 (PQKPSPSPPSRS) are compositionally biased toward pro residues. A compositionally biased stretch (low complexity) spans 30–45 (PKPVLISSLPSLPSGA). 4 helical membrane passes run 71–91 (MLVN…LPSI), 99–119 (GINT…CFFF), 173–193 (LTVN…AIAF), and 213–233 (VMES…LVFP).

The protein belongs to the plant DMP1 protein family. Restricted to flowers and pollen.

The protein localises to the endoplasmic reticulum membrane. The protein resides in the vacuole membrane. Its function is as follows. Involved in membrane remodeling. This Arabidopsis thaliana (Mouse-ear cress) protein is Protein DMP9.